A 226-amino-acid polypeptide reads, in one-letter code: Killer cell lectin-like receptor subfamily E member 1 (226 aa).

Residues Met1–Thr28 form a disordered region. Residues Met1–Arg68 lie on the Cytoplasmic side of the membrane. Residues Thr7 to Lys18 are compositionally biased toward polar residues. Residues Leu69–Thr89 traverse the membrane as a helical; Signal-anchor for type II membrane protein segment. Residues Thr90–Lys226 lie on the Extracellular side of the membrane. 3 cysteine pairs are disulfide-bonded: Cys113–Cys124, Cys141–Cys224, and Cys202–Cys216. The 106-residue stretch at Phe120–Lys225 folds into the C-type lectin domain. N-linked (GlcNAc...) asparagine glycosylation is present at Asn145.

As to quaternary structure, heterodimer; with KLRI1 or KLRI2. Expressed in natural killer (NK) cells (at protein level). Also detected in natural killer T (NKT) cells (at protein level). Has little or no expression in T cells (at protein level).

It localises to the cell membrane. In terms of biological role, lectin-like receptor for natural killer (NK) cells. Can either inhibit or activate NK cell cytotoxic activity, depending on its binding partner. Heterodimer formation with KLRI1 mediates NK cell inhibition whereas heterodimer formation with KLRI2 mediates NK cell activation. Plays a role in allogeneic recognition by the immune system. This is Killer cell lectin-like receptor subfamily E member 1 from Mus musculus (Mouse).